We begin with the raw amino-acid sequence, 420 residues long: DNA repair protein NreA (420 aa).

Positions Q413–A420 match the PIP motif motif.

Belongs to the Nre family. Interacts with the DNA polymerase sliding clamp (PCNA) via the PIP (PCNA-interacting peptide) motif.

Its function is as follows. Involved in DNA damage repair. Works together with the UvrABC proteins in repairing DNA damage resulting from exposure to the DNA damaging agent mitomycin C (MMC). This Haloferax volcanii (strain ATCC 29605 / DSM 3757 / JCM 8879 / NBRC 14742 / NCIMB 2012 / VKM B-1768 / DS2) (Halobacterium volcanii) protein is DNA repair protein NreA.